Consider the following 396-residue polypeptide: Phosphoglycerate kinase (396 aa).

Substrate is bound by residues 21 to 23 (DFN), arginine 36, 59 to 62 (HLGK), arginine 119, and arginine 156. ATP is bound by residues lysine 206, glutamate 325, and 352–355 (GGDS).

Belongs to the phosphoglycerate kinase family. Monomer.

The protein resides in the cytoplasm. The enzyme catalyses (2R)-3-phosphoglycerate + ATP = (2R)-3-phospho-glyceroyl phosphate + ADP. Its pathway is carbohydrate degradation; glycolysis; pyruvate from D-glyceraldehyde 3-phosphate: step 2/5. The chain is Phosphoglycerate kinase from Staphylococcus epidermidis (strain ATCC 35984 / DSM 28319 / BCRC 17069 / CCUG 31568 / BM 3577 / RP62A).